The primary structure comprises 610 residues: UvrABC system protein C (610 aa).

Residues 16–94 (SQPGVYRMYD…IKLYQPRYNV (79 aa)) enclose the GIY-YIG domain. The UVR domain maps to 204 to 239 (DQVLTQLIARMEKASQNLEFEEAARIRDQIQAVRRV).

The protein belongs to the UvrC family. In terms of assembly, interacts with UvrB in an incision complex.

It localises to the cytoplasm. Its function is as follows. The UvrABC repair system catalyzes the recognition and processing of DNA lesions. UvrC both incises the 5' and 3' sides of the lesion. The N-terminal half is responsible for the 3' incision and the C-terminal half is responsible for the 5' incision. This chain is UvrABC system protein C, found in Escherichia fergusonii (strain ATCC 35469 / DSM 13698 / CCUG 18766 / IAM 14443 / JCM 21226 / LMG 7866 / NBRC 102419 / NCTC 12128 / CDC 0568-73).